We begin with the raw amino-acid sequence, 420 residues long: Nucleobindin-2 (420 aa).

Residues 1-24 form the signal peptide; that stretch reads MRWRTILLQYCFLLITCLLTALEA. Residues 171 to 223 mediate DNA binding; that stretch reads KTRHEEFKKYEMMKEHERREYLKTLNEEKRKEEESKFEEMKKKHENHPKVNHP. The segment covering 195–212 has biased composition (basic and acidic residues); sequence LNEEKRKEEESKFEEMKK. A disordered region spans residues 195-225; the sequence is LNEEKRKEEESKFEEMKKKHENHPKVNHPGS. The binds to necdin stretch occupies residues 213-420; the sequence is KHENHPKVNH…AGELKFEPHI (208 aa). EF-hand domains follow at residues 241–276 and 293–328; these read PNDF…ELEK and ERLR…KEFL. Ca(2+) contacts are provided by Asp-254 and Asn-256. Ser-257 is modified (phosphoserine). Residues Asp-258, Glu-265, Asp-306, Asn-308, Asp-310, and Glu-317 each coordinate Ca(2+). Residues 304–334 carry the GBA motif; the sequence is EVDTNKDRLVTLEEFLKATEKKEFLEPDSWE. Ser-332 carries the phosphoserine modification. Residues 398-420 form a disordered region; that stretch reads QKKLQQGIPPSGPAGELKFEPHI.

This sequence belongs to the nucleobindin family. As to quaternary structure, interacts (via GBA motif) with guanine nucleotide-binding protein G(i) alpha subunit GNAI3. Preferentially interacts with inactive rather than active GNAI3. Interaction with GNAI3 is inhibited when NUCB2 binds calcium, probably due to a conformational change which renders the GBA motif inaccessible. Binds to the postmitotic growth suppressor NDN; coexpression abolishes NUCB2 secretion. Interacts with MC4R. As to expression, predominantly expressed in spleen, testis and normal stomach.

The protein resides in the golgi apparatus. The protein localises to the membrane. Its subcellular location is the cytoplasm. It localises to the secreted. It is found in the endoplasmic reticulum. The protein resides in the nucleus envelope. Functionally, calcium-binding protein which may have a role in calcium homeostasis. Acts as a non-receptor guanine nucleotide exchange factor which binds to and activates guanine nucleotide-binding protein (G-protein) alpha subunit GNAI3. Anorexigenic peptide, seems to play an important role in hypothalamic pathways regulating food intake and energy homeostasis, acting in a leptin-independent manner. May also exert hypertensive roles and modulate blood pressure through directly acting on peripheral arterial resistance. In intestinal epithelial cells, plays a role in the inhibition of hepatic glucose production via MC4R receptor leading to increased cyclic adenosine monophosphate (cAMP) levels and glucagon-like peptide 1 (GLP-1) secretion. The protein is Nucleobindin-2 of Homo sapiens (Human).